The sequence spans 146 residues: Hemoglobin subunit beta (146 aa).

Valine 1 carries the N-acetylvaline modification. The Globin domain occupies 2-146 (HLTDAEKALV…VATALAHKYH (145 aa)). Threonine 12 is modified (phosphothreonine). Serine 44 is modified (phosphoserine). Position 59 is an N6-acetyllysine (lysine 59). Histidine 63 is a heme b binding site. Lysine 82 carries the post-translational modification N6-acetyllysine. Residue histidine 92 coordinates heme b. The residue at position 93 (cysteine 93) is an S-nitrosocysteine. Lysine 144 carries the N6-acetyllysine modification.

It belongs to the globin family. Heterotetramer of two alpha chains and two beta chains. Red blood cells.

In terms of biological role, involved in oxygen transport from the lung to the various peripheral tissues. In Peromyscus crinitus (Canyon mouse), this protein is Hemoglobin subunit beta.